The chain runs to 548 residues: Membrane protein insertase YidC (548 aa).

A helical membrane pass occupies residues 6 to 26; the sequence is NLLVIALLFVSFMIWQAWEQD. The tract at residues 28–54 is disordered; sequence NPQPQTQQTTQTTTTAAGSAADQGVPA. Over residues 29-42 the composition is skewed to low complexity; the sequence is PQPQTQQTTQTTTT. The next 4 helical transmembrane spans lie at 350-370, 424-444, 458-478, and 499-519; these read FVGNWGFSIIIITFIVRGIMY, FPLIIQMPIFLALYYMLMGSI, LSAQDPYYILPILMGVTMFFI, and PVIFTVFFLWFPSGLVLYYIV.

The protein belongs to the OXA1/ALB3/YidC family. Type 1 subfamily. Interacts with the Sec translocase complex via SecD. Specifically interacts with transmembrane segments of nascent integral membrane proteins during membrane integration.

It is found in the cell inner membrane. Its function is as follows. Required for the insertion and/or proper folding and/or complex formation of integral membrane proteins into the membrane. Involved in integration of membrane proteins that insert both dependently and independently of the Sec translocase complex, as well as at least some lipoproteins. Aids folding of multispanning membrane proteins. The chain is Membrane protein insertase YidC from Salmonella arizonae (strain ATCC BAA-731 / CDC346-86 / RSK2980).